We begin with the raw amino-acid sequence, 952 residues long: Isoleucine--tRNA ligase (952 aa).

The short motif at 58–68 (PYANGDIHIGH) is the 'HIGH' region element. Glu576 is an L-isoleucyl-5'-AMP binding site. A 'KMSKS' region motif is present at residues 617-621 (KMSKS). Residue Lys620 participates in ATP binding. The Zn(2+) site is built by Cys915, Cys918, Cys935, and Cys938.

This sequence belongs to the class-I aminoacyl-tRNA synthetase family. IleS type 1 subfamily. In terms of assembly, monomer. Requires Zn(2+) as cofactor.

The protein resides in the cytoplasm. The enzyme catalyses tRNA(Ile) + L-isoleucine + ATP = L-isoleucyl-tRNA(Ile) + AMP + diphosphate. In terms of biological role, catalyzes the attachment of isoleucine to tRNA(Ile). As IleRS can inadvertently accommodate and process structurally similar amino acids such as valine, to avoid such errors it has two additional distinct tRNA(Ile)-dependent editing activities. One activity is designated as 'pretransfer' editing and involves the hydrolysis of activated Val-AMP. The other activity is designated 'posttransfer' editing and involves deacylation of mischarged Val-tRNA(Ile). The polypeptide is Isoleucine--tRNA ligase (Vibrio atlanticus (strain LGP32) (Vibrio splendidus (strain Mel32))).